A 199-amino-acid polypeptide reads, in one-letter code: Large ribosomal subunit protein mL51 (199 aa).

The N-terminal 15 residues, 1 to 15, are a transit peptide targeting the mitochondrion; sequence MNSNSLSRFTSIVRT.

It belongs to the mitochondrion-specific ribosomal protein mL51 family. Component of the mitochondrial ribosome large subunit (39S) which comprises a 16S rRNA and about 50 distinct proteins.

It is found in the mitochondrion. This is Large ribosomal subunit protein mL51 (mrpl-51) from Caenorhabditis elegans.